A 1195-amino-acid chain; its full sequence is Protein PIP82 (1195 aa).

Over residues 1–10 (MSHQEQQFQH) the composition is skewed to low complexity. 9 disordered regions span residues 1-55 (MSHQ…IGSS), 85-132 (KLRG…SQQF), 291-471 (NTFD…TANL), 493-515 (KVAKEPEELETKAEGSATGGASG), 544-567 (QRNANNQNATTSKQPKPNTVGHEP), 613-637 (EEDNEEDHSQDQTKRGQSSVSGIAT), 702-771 (MSPV…IVPK), 833-977 (SAGS…VKTS), and 1060-1195 (QITV…VVEI). A compositionally biased stretch (basic residues) spans 11–26 (YPHHQHHHHHHHHHIH). Over residues 37–50 (RSSDLEPNRSRNTD) the composition is skewed to basic and acidic residues. The span at 109–118 (GSAKDGAGAA) shows a compositional bias: low complexity. The segment covering 119-132 (QQTHLQVAGQSQQF) has biased composition (polar residues). Residues 300-313 (HEQFERGKISHETD) are compositionally biased toward basic and acidic residues. A compositionally biased stretch (low complexity) spans 351–360 (QQAAAEESPQ). Residues 361 to 371 (ANPPPPPPPRP) are compositionally biased toward pro residues. Residues 400–450 (ETTKTAENADENNASRKLSIRQNIKRLRKSIKRPSKIKSKAAAPVPDSDEE) are phospho-regulated basic and hydrophobic (PRBH) motif. Residues 422–438 (NIKRLRKSIKRPSKIKS) show a composition bias toward basic residues. The span at 494–505 (VAKEPEELETKA) shows a compositional bias: basic and acidic residues. Residues 545–560 (RNANNQNATTSKQPKP) are compositionally biased toward polar residues. 2 stretches are compositionally biased toward polar residues: residues 732–742 (SGPQKSMSYSP) and 856–867 (RVQSPQIGNSRE). A compositionally biased stretch (acidic residues) spans 872 to 891 (QEEEDKEAERDSEEEEEERD). 2 stretches are compositionally biased toward pro residues: residues 898–910 (SESPPPPPLPQRR) and 925–939 (VPPPLPVSKPPPPPS). The segment covering 940–968 (VETIPSVASLPSPAPVTRSMAQRSASMSR) has biased composition (low complexity). Residues 1075 to 1085 (QSDQSDQSAHQ) show a composition bias toward polar residues. Residues 1086–1095 (EITDTRKTKS) show a composition bias toward basic and acidic residues. Residues 1102-1111 (RQNSNCSRSE) are compositionally biased toward polar residues. 2 stretches are compositionally biased toward low complexity: residues 1114-1149 (SPLSFPSSRRSSTPTNLNANSNSNPNPSTNPNQNPS) and 1179-1195 (SYYSISPSGSSRYVVEI).

In terms of processing, phosphorylated by aPKC which lowers lipid affinity and promotes dissociation from the cell cortex. In the photoreceptor cells, aPKC-mediated phosphorylation leads to its displacement from the stalk apical cortex and thus restricts its localization to the rhabdomeric apical cortex where it functions. Dephosphorylation appears to be light-dependent. In terms of tissue distribution, restricted to photoreceptor cells (at protein level). Not detected until approximately 48hrs after puparium formation (APF) and then maintained in the photoreceptor cells post-eclosion (at protein level).

The protein resides in the cytoplasm. Its subcellular location is the cell cortex. It localises to the cytosol. The protein localises to the cell projection. It is found in the rhabdomere. Its function is as follows. Required for the morphological differentiation and maintenance of the rhabdomeric photoreceptor apical domain. Acts as a downstream component of the gl and Pph13 transcriptional pathway which is required for photoreceptor cell development. Likely to function by regulating the trafficking or retention of rhabdomeric proteins including the phototransduction proteins ninaE and didum. In Drosophila melanogaster (Fruit fly), this protein is Protein PIP82.